The following is a 396-amino-acid chain: MPSGTVALAFSGGLDTTVCVPLLKEEYGYDDVIGVTVDVGQPDAEFAAARETAAALGVEHHVVDATAEFAALCFDAVRANATYQGYPLGTALARPVIADAILSVAEAEGCAALAHGCTGKGNDQLRFEAVWRASDHDVCAPVRELGLTREWEIEYAAERDLPVEAGNEGEWSIDTNLWSRSVEGGHLEEPDYQPPADIYAWTDAPSGETGTVDITFEAGVPVAVDGTAMEPVALIEALNDRAGSYGVGRTDMLEDRMLGLKVRENYEHPAATTLLAAHKALEGLVLTKAERDFTAAVSQQWAQKAYEGVVEHPLMDALNGYLDETQSAVSGTVTIAFEGGRARPIARESEHAVYSADAASFNTETVAGIEQADATGVAKYHGFQSRLANAAFDGNK.

An ATP-binding site is contributed by 9-17 (AFSGGLDTT). Position 86 (Tyr-86) interacts with L-citrulline. Position 116 (Gly-116) interacts with ATP. Thr-118, Asn-122, and Asp-123 together coordinate L-aspartate. Asn-122 is an L-citrulline binding site. Positions 126, 172, 181, 254, and 266 each coordinate L-citrulline.

It belongs to the argininosuccinate synthase family. Type 1 subfamily. As to quaternary structure, homotetramer.

The protein resides in the cytoplasm. It carries out the reaction L-citrulline + L-aspartate + ATP = 2-(N(omega)-L-arginino)succinate + AMP + diphosphate + H(+). It functions in the pathway amino-acid biosynthesis; L-arginine biosynthesis; L-arginine from L-ornithine and carbamoyl phosphate: step 2/3. This chain is Argininosuccinate synthase, found in Halobacterium salinarum (strain ATCC 700922 / JCM 11081 / NRC-1) (Halobacterium halobium).